A 196-amino-acid polypeptide reads, in one-letter code: ATP-dependent Clp protease proteolytic subunit (196 aa).

Serine 96 functions as the Nucleophile in the catalytic mechanism. Histidine 121 is an active-site residue.

It belongs to the peptidase S14 family. As to quaternary structure, fourteen ClpP subunits assemble into 2 heptameric rings which stack back to back to give a disk-like structure with a central cavity, resembling the structure of eukaryotic proteasomes.

Its subcellular location is the cytoplasm. It catalyses the reaction Hydrolysis of proteins to small peptides in the presence of ATP and magnesium. alpha-casein is the usual test substrate. In the absence of ATP, only oligopeptides shorter than five residues are hydrolyzed (such as succinyl-Leu-Tyr-|-NHMec, and Leu-Tyr-Leu-|-Tyr-Trp, in which cleavage of the -Tyr-|-Leu- and -Tyr-|-Trp bonds also occurs).. Functionally, cleaves peptides in various proteins in a process that requires ATP hydrolysis. Has a chymotrypsin-like activity. Plays a major role in the degradation of misfolded proteins. This Streptococcus mutans serotype c (strain ATCC 700610 / UA159) protein is ATP-dependent Clp protease proteolytic subunit.